A 452-amino-acid polypeptide reads, in one-letter code: F-box only protein 47 (452 aa).

Positions 41-91 (FGNFKALPLEIFQIILKYLSVKDISMLSMVSKTVSQHIINYISTSSGSKRL) constitute an F-box domain.

In terms of assembly, part of a SCF (SKP1-cullin-F-box) protein ligase complex. As to expression, widely expressed, with highest levels in kidney, liver and pancreas. Down-regulated in tumors.

Probably recognizes and binds to some phosphorylated proteins and promotes their ubiquitination and degradation. The sequence is that of F-box only protein 47 from Homo sapiens (Human).